We begin with the raw amino-acid sequence, 106 residues long: ATP-dependent Clp protease adapter protein ClpS (106 aa).

This sequence belongs to the ClpS family. In terms of assembly, binds to the N-terminal domain of the chaperone ClpA.

Involved in the modulation of the specificity of the ClpAP-mediated ATP-dependent protein degradation. The chain is ATP-dependent Clp protease adapter protein ClpS from Citrobacter koseri (strain ATCC BAA-895 / CDC 4225-83 / SGSC4696).